We begin with the raw amino-acid sequence, 256 residues long: Ubiquinone/menaquinone biosynthesis C-methyltransferase UbiE (256 aa).

S-adenosyl-L-methionine is bound by residues Thr79, Asp100, and Asp128 to Ala129.

Belongs to the class I-like SAM-binding methyltransferase superfamily. MenG/UbiE family.

The catalysed reaction is a 2-demethylmenaquinol + S-adenosyl-L-methionine = a menaquinol + S-adenosyl-L-homocysteine + H(+). It carries out the reaction a 2-methoxy-6-(all-trans-polyprenyl)benzene-1,4-diol + S-adenosyl-L-methionine = a 5-methoxy-2-methyl-3-(all-trans-polyprenyl)benzene-1,4-diol + S-adenosyl-L-homocysteine + H(+). It functions in the pathway quinol/quinone metabolism; menaquinone biosynthesis; menaquinol from 1,4-dihydroxy-2-naphthoate: step 2/2. Its pathway is cofactor biosynthesis; ubiquinone biosynthesis. Functionally, methyltransferase required for the conversion of demethylmenaquinol (DMKH2) to menaquinol (MKH2) and the conversion of 2-polyprenyl-6-methoxy-1,4-benzoquinol (DDMQH2) to 2-polyprenyl-3-methyl-6-methoxy-1,4-benzoquinol (DMQH2). The chain is Ubiquinone/menaquinone biosynthesis C-methyltransferase UbiE from Pseudomonas savastanoi pv. phaseolicola (strain 1448A / Race 6) (Pseudomonas syringae pv. phaseolicola (strain 1448A / Race 6)).